The sequence spans 136 residues: Small ribosomal subunit protein bS16 (136 aa).

Belongs to the bacterial ribosomal protein bS16 family.

This is Small ribosomal subunit protein bS16 from Pseudarthrobacter chlorophenolicus (strain ATCC 700700 / DSM 12829 / CIP 107037 / JCM 12360 / KCTC 9906 / NCIMB 13794 / A6) (Arthrobacter chlorophenolicus).